Reading from the N-terminus, the 165-residue chain is 6,7-dimethyl-8-ribityllumazine synthase (165 aa).

5-amino-6-(D-ribitylamino)uracil contacts are provided by residues Trp26, Ser57–Glu59, and Val79–Val81. Residue Ala84–Thr85 participates in (2S)-2-hydroxy-3-oxobutyl phosphate binding. His87 (proton donor) is an active-site residue. Residue His112 participates in 5-amino-6-(D-ribitylamino)uracil binding. Residue Arg126 coordinates (2S)-2-hydroxy-3-oxobutyl phosphate.

Belongs to the DMRL synthase family.

The enzyme catalyses (2S)-2-hydroxy-3-oxobutyl phosphate + 5-amino-6-(D-ribitylamino)uracil = 6,7-dimethyl-8-(1-D-ribityl)lumazine + phosphate + 2 H2O + H(+). Its pathway is cofactor biosynthesis; riboflavin biosynthesis; riboflavin from 2-hydroxy-3-oxobutyl phosphate and 5-amino-6-(D-ribitylamino)uracil: step 1/2. Catalyzes the formation of 6,7-dimethyl-8-ribityllumazine by condensation of 5-amino-6-(D-ribitylamino)uracil with 3,4-dihydroxy-2-butanone 4-phosphate. This is the penultimate step in the biosynthesis of riboflavin. The polypeptide is 6,7-dimethyl-8-ribityllumazine synthase (Salinispora arenicola (strain CNS-205)).